The sequence spans 189 residues: Elongation factor P (189 aa).

K34 is modified (N6-(3,6-diaminohexanoyl)-5-hydroxylysine).

It belongs to the elongation factor P family. In terms of processing, may be beta-lysylated on the epsilon-amino group of Lys-34 by the combined action of EpmA and EpmB, and then hydroxylated on the C5 position of the same residue by EpmC (if this protein is present). Lysylation is critical for the stimulatory effect of EF-P on peptide-bond formation. The lysylation moiety may extend toward the peptidyltransferase center and stabilize the terminal 3-CCA end of the tRNA. Hydroxylation of the C5 position on Lys-34 may allow additional potential stabilizing hydrogen-bond interactions with the P-tRNA.

The protein resides in the cytoplasm. It functions in the pathway protein biosynthesis; polypeptide chain elongation. Involved in peptide bond synthesis. Alleviates ribosome stalling that occurs when 3 or more consecutive Pro residues or the sequence PPG is present in a protein, possibly by augmenting the peptidyl transferase activity of the ribosome. Modification of Lys-34 is required for alleviation. The chain is Elongation factor P from Halorhodospira halophila (strain DSM 244 / SL1) (Ectothiorhodospira halophila (strain DSM 244 / SL1)).